We begin with the raw amino-acid sequence, 430 residues long: Xaa-Pro aminopeptidase (430 aa).

Residues Asp-254, Asp-265, His-348, Glu-377, and Glu-400 each contribute to the Mn(2+) site.

Belongs to the peptidase M24B family. In terms of assembly, homotetramer. Mn(2+) is required as a cofactor.

It carries out the reaction Release of any N-terminal amino acid, including proline, that is linked to proline, even from a dipeptide or tripeptide.. This is Xaa-Pro aminopeptidase (pepP) from Haemophilus influenzae (strain ATCC 51907 / DSM 11121 / KW20 / Rd).